Reading from the N-terminus, the 134-residue chain is Small ribosomal subunit protein uS9 (134 aa).

The tract at residues 114-134 (EVERKKYGLKKARRAPQFSKR) is disordered. Residues 120–134 (YGLKKARRAPQFSKR) are compositionally biased toward basic residues.

The protein belongs to the universal ribosomal protein uS9 family.

The polypeptide is Small ribosomal subunit protein uS9 (Thermotoga sp. (strain RQ2)).